A 626-amino-acid chain; its full sequence is MADKSGRLLGGCSFVLDEADCSDLEIDSDDESDKENVPNGQDMCNSFDAEFIDNAPLAQGNTLALFQSQVAQAGKQKVNYLKRKLHLESSELGTVGRAVLQPVNHSTPAAKRRLFECSSSENEVSYAASPAAANTQVFRNQNSGSVGGSSGFGSQASVSQSQQNSNLHLQILKSKNSAACKLAVFKFVYAASFCDLTRPFKNDKTTNYQWVAAVFGVSEELFEASKQLLGRSCTYLHATCRAHEKGSVALLLLSFHVAKSRETVTNLLKNLLNLRAEHMMLQPPKLRGVTSAMFWYKMTLSPNTYTWGQLPRWIEQQILITENSSEVLKFDFSHMVQWALDNEMMDESSIAFHYAQMADHDSNARAWLGLSNQAKIVKDVCTMVHHYQRAIMRSMTMSAYVHKMCERVNVTGSWLVIMQFLKFHGIEPIRFVNALRPWLQGVPKKNCLAFIGPPDTGKSLFTNSLMSFLKGKVLNFANSASHFWLAPLTEAKVALIDDATHACLKYCDTYLRNFFDGYSVCIDRKHKNAVQIKAPPMLLTSNIDIQAEEKYSYLKSRVTCFYFNDKCPLNEDGKPLFQITDPDWKSFFERLWQRLELSDQEEEEEGDENGSRGTFICSTRNSNDFT.

Positions 82–84 (KRK) match the Nuclear localization signal motif. Ser-90 and Ser-106 each carry phosphoserine; by host. Positions 160 to 327 (QSQQNSNLHL…ILITENSSEV (168 aa)) are DNA-binding region. Residues 412–576 (GSWLVIMQFL…CPLNEDGKPL (165 aa)) form the SF3 helicase domain. 452–459 (GPPDTGKS) is a binding site for ATP. Residue Lys-533 forms a Glycyl lysine isopeptide (Lys-Gly) (interchain with G-Cter in SUMO) linkage. A compositionally biased stretch (acidic residues) spans 598-608 (SDQEEEEEGDE). Positions 598–626 (SDQEEEEEGDENGSRGTFICSTRNSNDFT) are disordered. The segment covering 616–626 (ICSTRNSNDFT) has biased composition (polar residues).

This sequence belongs to the papillomaviridae E1 protein family. Can form hexamers. Interacts with E2 protein; this interaction increases E1 DNA binding specificity. Interacts with host DNA polymerase subunit POLA2. Interacts with host single stranded DNA-binding protein RPA1. Interacts with host TOP1; this interaction stimulates the enzymatic activity of TOP1. Post-translationally, phosphorylated. In terms of processing, sumoylated.

The protein resides in the host nucleus. It catalyses the reaction Couples ATP hydrolysis with the unwinding of duplex DNA by translocating in the 3'-5' direction.. It carries out the reaction ATP + H2O = ADP + phosphate + H(+). ATP-dependent DNA 3'-5' helicase required for initiation of viral DNA replication. It forms a complex with the viral E2 protein. The E1-E2 complex binds to the replication origin which contains binding sites for both proteins. During the initial step, a dimer of E1 interacts with a dimer of protein E2 leading to a complex that binds the viral origin of replication with high specificity. Then, a second dimer of E1 displaces the E2 dimer in an ATP-dependent manner to form the E1 tetramer. Following this, two E1 monomers are added to each half of the site, which results in the formation of two E1 trimers on the viral ori. Subsequently, two hexamers will be created. The double hexamer acts as a bi-directional helicase machinery and unwinds the viral DNA and then recruits the host DNA polymerase to start replication. This chain is Replication protein E1, found in Bovine papillomavirus type 5.